The primary structure comprises 115 residues: General stress protein 17M (115 aa).

This is General stress protein 17M (yflT) from Bacillus subtilis (strain 168).